The chain runs to 112 residues: Nucleoid-associated protein lpp2803 (112 aa).

The protein belongs to the YbaB/EbfC family. Homodimer.

The protein resides in the cytoplasm. It localises to the nucleoid. Binds to DNA and alters its conformation. May be involved in regulation of gene expression, nucleoid organization and DNA protection. The chain is Nucleoid-associated protein lpp2803 from Legionella pneumophila (strain Paris).